The chain runs to 463 residues: Gamma-aminobutyric acid receptor subunit alpha-5 (463 aa).

The signal sequence occupies residues 1–25 (MDNGMLSRFIMTQTLLVFCISMTLS). Topologically, residues 26-260 (SHFGFSQMPT…FHLKRKIGYF (235 aa)) are extracellular. Asn-45 carries N-linked (GlcNAc...) asparagine glycosylation. Arg-101 lines the 4-aminobutanoate pocket. Asn-145 carries N-linked (GlcNAc...) asparagine glycosylation. 4-aminobutanoate is bound at residue Thr-164. Cys-173 and Cys-187 form a disulfide bridge. Residues Asn-207 and Asn-236 are each glycosylated (N-linked (GlcNAc...) asparagine). The next 3 helical transmembrane spans lie at 261–281 (VIQTYLPCIMTVILSQVSFWL), 287–308 (PARTVFGVTTVLTMTTLSISAR), and 319–340 (AMDWFIAVCYAFVFSALIEFAT). Residues 341-428 (VNYFTKRGWA…TYNSISKIDK (88 aa)) lie on the Cytoplasmic side of the membrane. Lys-355 is covalently cross-linked (Glycyl lysine isopeptide (Lys-Gly) (interchain with G-Cter in ubiquitin)). A disordered region spans residues 387–408 (PNIPKEQPPAGTANAPTVSIKA). Residues 429–449 (MSRIVFPILFGTFNLVYWATY) traverse the membrane as a helical segment.

The protein belongs to the ligand-gated ion channel (TC 1.A.9) family. Gamma-aminobutyric acid receptor (TC 1.A.9.5) subfamily. GABRA5 sub-subfamily. Heteropentamer, formed by a combination of alpha (GABRA1-6), beta (GABRB1-3), gamma (GABRG1-3), delta (GABRD), epsilon (GABRE), rho (GABRR1-3), pi (GABRP) and theta (GABRQ) chains, each subunit exhibiting distinct physiological and pharmacological properties. Expressed in brain, in hippocampal pyramidal neurons.

It is found in the postsynaptic cell membrane. It localises to the cell membrane. It catalyses the reaction chloride(in) = chloride(out). Functionally, alpha subunit of the heteropentameric ligand-gated chloride channel gated by gamma-aminobutyric acid (GABA), a major inhibitory neurotransmitter in the brain. GABA-gated chloride channels, also named GABA(A) receptors (GABAAR), consist of five subunits arranged around a central pore and contain GABA active binding site(s) located at the alpha and beta subunit interface(s). When activated by GABA, GABAARs selectively allow the flow of chloride anions across the cell membrane down their electrochemical gradient. GABAARs containing alpha-5/GABRA5 are mainly extrasynaptic and contribute to the tonic GABAergic inhibition of the hippocampus. Extrasynaptic alpha-5-containing GABAARs in CA1 pyramidal neurons play a role in learning and memory processes. The polypeptide is Gamma-aminobutyric acid receptor subunit alpha-5 (Mus musculus (Mouse)).